The chain runs to 226 residues: Ribose-5-phosphate isomerase A (226 aa).

Residues 25–28 (TGST), 81–84 (DGAD), and 94–97 (KGGG) contribute to the substrate site. The Proton acceptor role is filled by Glu103. Residue Lys121 coordinates substrate.

This sequence belongs to the ribose 5-phosphate isomerase family. In terms of assembly, homodimer.

The enzyme catalyses aldehydo-D-ribose 5-phosphate = D-ribulose 5-phosphate. The protein operates within carbohydrate degradation; pentose phosphate pathway; D-ribose 5-phosphate from D-ribulose 5-phosphate (non-oxidative stage): step 1/1. Its function is as follows. Catalyzes the reversible conversion of ribose-5-phosphate to ribulose 5-phosphate. The sequence is that of Ribose-5-phosphate isomerase A from Enterococcus faecalis (strain ATCC 700802 / V583).